A 370-amino-acid polypeptide reads, in one-letter code: Apolipoprotein A-V (370 aa).

The signal sequence occupies residues 1-21 (MASMIALLTWALALLPALASA). Ser59 is modified (phosphoserine).

Belongs to the apolipoprotein A1/A4/E family. Interacts with GPIHBP1. Interacts with SORL1; this interaction leads to APOA5 internalization and sorting either to lysosomes and degradation, or to the trans-Golgi network.

It is found in the secreted. It localises to the early endosome. The protein resides in the late endosome. Its subcellular location is the golgi apparatus. The protein localises to the trans-Golgi network. Its function is as follows. Minor apolipoprotein mainly associated with HDL and to a lesser extent with VLDL. May also be associated with chylomicrons. Important determinant of plasma triglyceride (TG) levels by both being a potent stimulator of apo-CII lipoprotein lipase (LPL) TG hydrolysis and an inhibitor of the hepatic VLDL-TG production rate (without affecting the VLDL-apoB production rate). Activates poorly lecithin:cholesterol acyltransferase (LCAT) and does not enhance efflux of cholesterol from macrophages. Binds heparin. This is Apolipoprotein A-V (APOA5) from Acinonyx jubatus (Cheetah).